The primary structure comprises 1066 residues: MAGNDWINSYLEAILDAGGAAGEISAAAGGGGDGAAATGEKRDKSSLMLRERGRFSPARYFVEEVISGFDETDLYKTWVRTAAMRSPQERNTRLENMSWRIWNLARKKKQIEGEEASRLAKQRLEREKARRYAAADMSEDLSEGEKGENINESSSTHDESTRGRMPRIGSTDAIEAWASQHKDKKLYIVLISIHGLIRGENMELGRDSDTGGQVKYVVELARALGSTPGVYRVDLLTRQISAPDVDWSYGEPTEMLSPRNSENFGHDMGESSGAYIVRIPFGPRDKYIPKEHLWPHIQEFVDGALVHIMQMSKVLGEQVGSGQLVWPVVIHGHYADAGDSAALLSGALNVPMIFTGHSLGRDKLEQLLKQGRQTRDEINTIYKIMRRIEAEELCLDASEIIITSTRQEIEQQWGLYDGFDLTMARKLRARIKRGVSCYGRYMPRMIAVPPGMEFSHIVPHDVDQDGEEANEDGSGSTDPPIWADIMRFFSNPRKPMILALARPDPKKNITTLVKAFGEHRELRNLANLTLIMGNRDVIDEMSSTNSAVLTSILKLIDKYDLYGQVAYPKHHKQSEVPDIYRLAARTKGVFINCAFIEPFGLTLIEAAAYGLPMVATRNGGPVDIHRVLDNGILVDPHNQNEIAEALYKLVSDKQLWAQCRQNGLKNIHQFSWPEHCKNYLSRVGTLKPRHPRWQKSDDATEVSEADSPGDSLRDVHDISLNLKLSLDSEKSSTKENSVRRNLEDAVQKLSRGVSANRKTESVENMEATTGNKWPSLRRRKHIVVIAIDSVQDANLVEIIKNIFVASSNERLSGSVGFVLSTSRAISEVHSLLTSGGIEATDFDAFICNSGSDLCYPSSNSEDMLSPAELPFMIDLDYHTQIEYRWGGEGLRKTLICWAAEKSEGGQVVLVEDEECSSTYCISFRVKNAEAVPPVKELRKTMRIQALRCHVLYSHDGSKLNVIPVLASRSQALRYLYIRWGVELSNMTVVVGESGDTDYEGLLGGVHKTIILKGSFNAVPNQVHAARSYSLQDVISFDKPGITSIEGYGPDNLKSALQQFGILKDNV.

2 disordered regions span residues 132-166 (YAAA…GRMP) and 688-714 (PRHP…SLRD). A compositionally biased stretch (basic and acidic residues) spans 143–162 (EGEKGENINESSSTHDESTR).

It belongs to the glycosyltransferase 1 family. In terms of assembly, homodimer or homotetramer. Expressed in germinating seeds.

It carries out the reaction beta-D-fructose 6-phosphate + UDP-alpha-D-glucose = sucrose 6(F)-phosphate + UDP + H(+). The protein operates within glycan biosynthesis; sucrose biosynthesis; sucrose from D-fructose 6-phosphate and UDP-alpha-D-glucose: step 1/2. Activity is regulated by phosphorylation and moderated by concentration of metabolites and light. Plays a role in photosynthetic sucrose synthesis by catalyzing the rate-limiting step of sucrose biosynthesis from UDP-glucose and fructose- 6-phosphate. Involved in the regulation of carbon partitioning in the leaves of plants. May regulate the synthesis of sucrose and therefore play a major role as a limiting factor in the export of photoassimilates out of the leaf. Plays a role for sucrose availability that is essential for plant growth and fiber elongation. This is Probable sucrose-phosphate synthase 4 (SPS4) from Oryza sativa subsp. japonica (Rice).